Reading from the N-terminus, the 342-residue chain is Alternative oxidase, mitochondrial (342 aa).

The transit peptide at 1 to 20 (MIKTYQYRSILNSRNVGIRF) directs the protein to the mitochondrion. A helical membrane pass occupies residues 135–155 (LTRCIFLESVAGVPGMVAAFI). Positions 142, 181, and 184 each coordinate Fe cation. The chain crosses the membrane as a helical span at residues 200–220 (FIIYMGQGVFANLFFLVYLIK). Fe cation is bound by residues glutamate 232, glutamate 287, and histidine 290. Basic and acidic residues-rich tracts occupy residues 308 to 321 (PFAL…KEQQ) and 330 to 342 (PHPE…QMRL). The disordered stretch occupies residues 308–342 (PFALKVEDVPKEQQPDEYSLKTPHPEGWNREQMRL).

This sequence belongs to the alternative oxidase family. Homodimer; disulfide-linked. Requires Fe cation as cofactor.

Its subcellular location is the mitochondrion inner membrane. Its function is as follows. Catalyzes cyanide-resistant oxygen consumption. May increase respiration when the cytochrome respiratory pathway is restricted, or in response to low temperatures. The protein is Alternative oxidase, mitochondrial (AOX1) of Wickerhamomyces anomalus (Yeast).